Reading from the N-terminus, the 136-residue chain is Nucleoside diphosphate kinase (136 aa).

Lys-10, Phe-58, Arg-86, Thr-92, Arg-104, and Asn-114 together coordinate ATP. Residue His-117 is the Pros-phosphohistidine intermediate of the active site.

Belongs to the NDK family. As to quaternary structure, homotetramer. Mg(2+) serves as cofactor.

Its subcellular location is the cytoplasm. It carries out the reaction a 2'-deoxyribonucleoside 5'-diphosphate + ATP = a 2'-deoxyribonucleoside 5'-triphosphate + ADP. It catalyses the reaction a ribonucleoside 5'-diphosphate + ATP = a ribonucleoside 5'-triphosphate + ADP. Its function is as follows. Major role in the synthesis of nucleoside triphosphates other than ATP. The ATP gamma phosphate is transferred to the NDP beta phosphate via a ping-pong mechanism, using a phosphorylated active-site intermediate. This Mycolicibacterium paratuberculosis (strain ATCC BAA-968 / K-10) (Mycobacterium paratuberculosis) protein is Nucleoside diphosphate kinase.